The primary structure comprises 465 residues: MASQLTQRGALFLLFFLTPAVTPTWYAGSGYYPDESYNEVYAEEVPQAPALDYRVPRWCYTLNIQDGEATCYSPKGGNYHSSLGTRCELSCDRGFRLIGRRSVQCLPSRRWSGTAYCRQMRCHALPFITSGTYTCTNGVLLDSRCDYSCSSGYHLEGDRSRICMEDGRWSGGEPVCVDIDPPKIRCPHSREKMAEPEKLTARVYWDPPLVKDSADGTITRVTLRGPEPGSHFPEGEHVIRYTAYDRAYNRASCKFIVKVQVRRCPTLKPPQHGYLTCTSAGDNYGATCEYHCDGGYDRQGTPSRVCQSSRQWSGSPPICAPMKINVNVNSAAGLLDQFYEKQRLLIISAPDPSNRYYKMQISMLQQSTCGLDLRHVTIIELVGQPPQEVGRIREQQLSANIIEELRQFQRLTRSYFNMVLIDKQGIDRDRYMEPVTPEEIFTFIDDYLLSNQELTQRREQRDICE.

An N-terminal signal peptide occupies residues 1–23 (MASQLTQRGALFLLFFLTPAVTP). 3 consecutive Sushi domains span residues 69–119 (ATCY…YCRQ), 120–178 (MRCH…VCVD), and 262–321 (RRCP…ICAP). Disulfide bonds link Cys71-Cys105, Cys91-Cys117, Cys122-Cys163, and Cys149-Cys176. Residues 177–261 (VDIDPPKIRC…SCKFIVKVQV (85 aa)) enclose the HYR domain. 2 cysteine pairs are disulfide-bonded: Cys264–Cys306 and Cys292–Cys319.

Forms homooligomers. Interacts with PLAUR (via the UPAR/Ly6 domains), ADAMTS4 and CTSB. Interacts with HGF; the interaction increases the mitogenic activity of HGF. Post-translationally, contains chondroitin sulfate chains. Expressed in neurons of the rolandic area of the brain (at protein level). Highly expressed in the brain, placenta, lung, trachea, uterus, adrenal gland, heart, ovary and placenta. Weakly expressed in the peripheral blood, brain and bone marrow. Expressed in numerous cancer cell lines and in gastrointestinal cancer cells. Higher levels found in colorectal cancers than in normal colonic mucosa.

It localises to the secreted. The protein localises to the cytoplasm. Its subcellular location is the cell surface. It is found in the synapse. Its function is as follows. Acts as a ligand for the urokinase plasminogen activator surface receptor. Plays a role in angiogenesis by inducing endothelial cell migration and the formation of vascular network (cords). Involved in cellular migration and adhesion. Increases the phosphorylation levels of FAK. Interacts with and increases the mitogenic activity of HGF. Promotes synapse formation. May have a role in the perisylvian region, critical for language and cognitive development. The protein is Sushi repeat-containing protein SRPX2 (SRPX2) of Homo sapiens (Human).